The sequence spans 422 residues: Dioxygenase str8 (422 aa).

Residues Cys-73, Cys-75, Cys-78, and His-119 each contribute to the Zn(2+) site. Fe cation is bound by residues His-243, Asp-245, and His-382.

The protein belongs to the gamma-BBH/TMLD family. Fe(2+) is required as a cofactor.

It participates in mycotoxin biosynthesis. Its function is as follows. Dioxygenase; part of the gene cluster that mediates the biosynthesis of strobilurin A, an antifungal polyketide that contains a key beta-methoxyacrylate toxophore that targets the complex III of the mitochondrial electron transport chain. Strobilurin biosynthesis begins with construction of benzoyl CoA by step-wise elimination of ammonia from phenylalanine by the phenylalanine ammonia-lyase str11, oxygenation by str8 and retro-Claisen reaction to form benzoic acid, which is activated to its CoA thiolester benzoyl CoA by the dedicated CoA ligase str10. Benzoyl CoA forms the starter unit for the highly reducing polyketide synthase stpks1 that produces the polyketide prestrobilutin A. The FAD-dependent oxygenase str9 then catalyzes the key oxidative rearrangement responsible for the creation of the beta-methoxyacrylate toxophore. Str9 performs epoxidation of the 2,3 olefin of prestrobilutin A, followed by Meinwald rearrangement to furnish the aldehyde intermediate. Rapid enolization of the aldehyde intermediate would give the beta-methoxyacrylate skeleton and methylations catalyzed by str2 and str3 complete the synthesis and lead to the production of strobilurin A. The short-chain dehydrogenase stl2 and the dehydrogenase str4 play a role in the shunt pathway leading to the production of bolineol. The cluster encodes no obvious halogenase gene that could be involved in production of strobilurin B, nor any obvious dimethylallyl-transferase that could be involved in the production of strobilurin G. It is possible that unknown proteins encoded in, or near, the cluster (such as str1 or stl1) may form new classes of halogenases or dimethylally-transferases, or that the responsible genes are located elsewhere on the genome. Similarly, proteins encoded by str5/str6 hydrolases appear to have no chemical role in the biosynthesis of strobilurin A. Finally, no obvious self-resistance gene is found within the cluster. The sequence is that of Dioxygenase str8 from Strobilurus tenacellus.